The chain runs to 316 residues: Lipoyl synthase (316 aa).

A compositionally biased stretch (basic and acidic residues) spans 1-15 (MKARNESMSKGEYKT). Positions 1–33 (MKARNESMSKGEYKTKSLKNRPDPTQPKLKKPS) are disordered. Residues Cys-64, Cys-69, Cys-75, Cys-90, Cys-94, Cys-97, and Ser-304 each coordinate [4Fe-4S] cluster. Positions 76–293 (FGHGTATFMI…EQAGMEMGFT (218 aa)) constitute a Radical SAM core domain.

Belongs to the radical SAM superfamily. Lipoyl synthase family. Requires [4Fe-4S] cluster as cofactor.

It localises to the cytoplasm. The enzyme catalyses [[Fe-S] cluster scaffold protein carrying a second [4Fe-4S](2+) cluster] + N(6)-octanoyl-L-lysyl-[protein] + 2 oxidized [2Fe-2S]-[ferredoxin] + 2 S-adenosyl-L-methionine + 4 H(+) = [[Fe-S] cluster scaffold protein] + N(6)-[(R)-dihydrolipoyl]-L-lysyl-[protein] + 4 Fe(3+) + 2 hydrogen sulfide + 2 5'-deoxyadenosine + 2 L-methionine + 2 reduced [2Fe-2S]-[ferredoxin]. It participates in protein modification; protein lipoylation via endogenous pathway; protein N(6)-(lipoyl)lysine from octanoyl-[acyl-carrier-protein]: step 2/2. In terms of biological role, catalyzes the radical-mediated insertion of two sulfur atoms into the C-6 and C-8 positions of the octanoyl moiety bound to the lipoyl domains of lipoate-dependent enzymes, thereby converting the octanoylated domains into lipoylated derivatives. The chain is Lipoyl synthase from Hydrogenovibrio crunogenus (strain DSM 25203 / XCL-2) (Thiomicrospira crunogena).